Reading from the N-terminus, the 185-residue chain is Acireductone dioxygenase (185 aa).

Residues His96, His98, Glu102, and His140 each contribute to the Fe(2+) site. Residues His96, His98, Glu102, and His140 each coordinate Ni(2+).

This sequence belongs to the acireductone dioxygenase (ARD) family. As to quaternary structure, monomer. It depends on Fe(2+) as a cofactor. Ni(2+) serves as cofactor.

The enzyme catalyses 1,2-dihydroxy-5-(methylsulfanyl)pent-1-en-3-one + O2 = 3-(methylsulfanyl)propanoate + CO + formate + 2 H(+). The catalysed reaction is 1,2-dihydroxy-5-(methylsulfanyl)pent-1-en-3-one + O2 = 4-methylsulfanyl-2-oxobutanoate + formate + 2 H(+). It functions in the pathway amino-acid biosynthesis; L-methionine biosynthesis via salvage pathway; L-methionine from S-methyl-5-thio-alpha-D-ribose 1-phosphate: step 5/6. In terms of biological role, catalyzes 2 different reactions between oxygen and the acireductone 1,2-dihydroxy-3-keto-5-methylthiopentene (DHK-MTPene) depending upon the metal bound in the active site. Fe-containing acireductone dioxygenase (Fe-ARD) produces formate and 2-keto-4-methylthiobutyrate (KMTB), the alpha-ketoacid precursor of methionine in the methionine recycle pathway. Ni-containing acireductone dioxygenase (Ni-ARD) produces methylthiopropionate, carbon monoxide and formate, and does not lie on the methionine recycle pathway. This is Acireductone dioxygenase from Marinobacter nauticus (strain ATCC 700491 / DSM 11845 / VT8) (Marinobacter aquaeolei).